We begin with the raw amino-acid sequence, 213 residues long: Probable transaldolase (213 aa).

Lysine 83 functions as the Schiff-base intermediate with substrate in the catalytic mechanism.

This sequence belongs to the transaldolase family. Type 3B subfamily.

The protein localises to the cytoplasm. It carries out the reaction D-sedoheptulose 7-phosphate + D-glyceraldehyde 3-phosphate = D-erythrose 4-phosphate + beta-D-fructose 6-phosphate. It functions in the pathway carbohydrate degradation; pentose phosphate pathway; D-glyceraldehyde 3-phosphate and beta-D-fructose 6-phosphate from D-ribose 5-phosphate and D-xylulose 5-phosphate (non-oxidative stage): step 2/3. Its function is as follows. Transaldolase is important for the balance of metabolites in the pentose-phosphate pathway. This is Probable transaldolase from Geobacillus sp. (strain WCH70).